The following is a 320-amino-acid chain: Methionyl-tRNA formyltransferase (320 aa).

114–117 contributes to the (6S)-5,6,7,8-tetrahydrofolate binding site; it reads SLLP.

Belongs to the Fmt family.

It carries out the reaction L-methionyl-tRNA(fMet) + (6R)-10-formyltetrahydrofolate = N-formyl-L-methionyl-tRNA(fMet) + (6S)-5,6,7,8-tetrahydrofolate + H(+). Attaches a formyl group to the free amino group of methionyl-tRNA(fMet). The formyl group appears to play a dual role in the initiator identity of N-formylmethionyl-tRNA by promoting its recognition by IF2 and preventing the misappropriation of this tRNA by the elongation apparatus. This chain is Methionyl-tRNA formyltransferase, found in Acinetobacter baumannii (strain SDF).